The sequence spans 903 residues: KAT8 regulatory NSL complex subunit 1-like protein (903 aa).

Disordered regions lie at residues 319–343 (DSDATGSSSDEDWDEKARQNSDECN), 419–441 (MPKSPQGTNPSPTNDLDMSPSSP), and 652–676 (TECTSSYSPDPQTPAHSWERRHRSE). 2 stretches are compositionally biased toward polar residues: residues 423-441 (PQGTNPSPTNDLDMSPSSP) and 652-661 (TECTSSYSPD). Positions 748–862 (EIITPSWKEV…ESPKGKTIHW (115 aa)) constitute a PEHE domain.

In Xenopus tropicalis (Western clawed frog), this protein is KAT8 regulatory NSL complex subunit 1-like protein (kansl1l).